A 105-amino-acid polypeptide reads, in one-letter code: Thioredoxin (105 aa).

One can recognise a Thioredoxin domain in the interval 2 to 105; sequence VKQIESKYAF…KLEATINELI (104 aa). An N6-acetyllysine modification is found at Lys-3. At Lys-8 the chain carries N6-succinyllysine. Catalysis depends on nucleophile residues Cys-32 and Cys-35. Cys-32 and Cys-35 are joined by a disulfide. Lys-39 bears the N6-acetyllysine mark. 2 positions are modified to S-nitrosocysteine: Cys-62 and Cys-69. Cys-73 carries the post-translational modification S-nitrosocysteine; alternate. Lys-94 is subject to N6-acetyllysine; alternate. Residue Lys-94 is modified to N6-succinyllysine; alternate.

Belongs to the thioredoxin family. Homodimer; disulfide-linked. Interacts with TXNIP through the redox-active site. Interacts with MAP3K5 and CASP3. Interacts with APEX1; the interaction stimulates the FOS/JUN AP-1 DNA-binding activity in a redox-dependent manner. In the fully reduced protein, both Cys-69 and Cys-73 are nitrosylated in response to nitric oxide (NO). When two disulfide bonds are present in the protein, only Cys-73 is nitrosylated. Cys-73 can serve as donor for nitrosylation of target proteins. In terms of tissue distribution, erythrocytes.

The protein localises to the nucleus. It localises to the cytoplasm. The protein resides in the secreted. Its function is as follows. Participates in various redox reactions through the reversible oxidation of its active center dithiol to a disulfide and catalyzes dithiol-disulfide exchange reactions. Plays a role in the reversible S-nitrosylation of cysteine residues in target proteins, and thereby contributes to the response to intracellular nitric oxide. Nitrosylates the active site Cys of CASP3 in response to nitric oxide (NO), and thereby inhibits caspase-3 activity. Induces the FOS/JUN AP-1 DNA binding activity in ionizing radiation (IR) cells through its oxidation/reduction status and stimulates AP-1 transcriptional activity. The chain is Thioredoxin (TXN) from Sus scrofa (Pig).